The primary structure comprises 540 residues: Chaperonin GroEL (540 aa).

Residues 29 to 32 (TLGP), 86 to 90 (DGTTT), glycine 413, 478 to 480 (DAL), and aspartate 494 contribute to the ATP site.

The protein belongs to the chaperonin (HSP60) family. As to quaternary structure, forms a cylinder of 14 subunits composed of two heptameric rings stacked back-to-back. Interacts with the co-chaperonin GroES.

It is found in the cytoplasm. It catalyses the reaction ATP + H2O + a folded polypeptide = ADP + phosphate + an unfolded polypeptide.. Functionally, together with its co-chaperonin GroES, plays an essential role in assisting protein folding. The GroEL-GroES system forms a nano-cage that allows encapsulation of the non-native substrate proteins and provides a physical environment optimized to promote and accelerate protein folding. This Clostridioides difficile (Peptoclostridium difficile) protein is Chaperonin GroEL.